Here is a 161-residue protein sequence, read N- to C-terminus: GTP-dependent dephospho-CoA kinase (161 aa).

GTP-binding residues include aspartate 40, valine 41, valine 42, aspartate 59, glutamate 112, and glutamate 135.

It belongs to the GTP-dependent DPCK family.

The catalysed reaction is 3'-dephospho-CoA + GTP = GDP + CoA + H(+). The protein operates within cofactor biosynthesis; coenzyme A biosynthesis. Catalyzes the GTP-dependent phosphorylation of the 3'-hydroxyl group of dephosphocoenzyme A to form coenzyme A (CoA). The sequence is that of GTP-dependent dephospho-CoA kinase from Methanocorpusculum labreanum (strain ATCC 43576 / DSM 4855 / Z).